Here is a 353-residue protein sequence, read N- to C-terminus: Keratocan (353 aa).

The N-terminal stretch at 1-21 is a signal peptide; sequence MMTLKVCPSLLLLFLVHSVWT. Positions 34–72 constitute an LRRNT domain; sequence EHWSHYTFECPQECFCPPSFPNALYCDNKGLKEIPAIPA. Intrachain disulfides connect cysteine 43–cysteine 49 and cysteine 47–cysteine 59. LRR repeat units lie at residues 73-94, 97-118, 123-143, 144-165, 168-188, 194-214, 215-236, 239-262, 264-283, and 284-305; these read RIWYLYLQNNLIETISEKPFVN, HLRWINLNKNKITNNGIESGVL, RLLYLFLEDNELEEVPAPLPV, GLEQLRLARNKISRIPEGVFSN, NLTMLDLHQNNLLDSALQSDT, SLMQLNIAKNSLKKMPLSIPA, NTLQLFLDNNSIEVIPENYFSA, KVTFLRLNYNKLSDDGIPPNGFNV, SILDLQLSHNQLTKIPPINA, and HLEHLHLDHNRIKSVNGTQICP. Asparagine 94 carries an N-linked (GlcNAc...) (keratan sulfate) asparagine glycan. Asparagine 168 is a glycosylation site (N-linked (GlcNAc...) asparagine). Asparagine 223 and asparagine 261 each carry an N-linked (GlcNAc...) (keratan sulfate) asparagine glycan. N-linked (GlcNAc...) asparagine glycosylation occurs at asparagine 299. A disulfide bridge links cysteine 304 with cysteine 344.

The protein belongs to the small leucine-rich proteoglycan (SLRP) family. SLRP class II subfamily. Binds keratan sulfate chains.

Its subcellular location is the secreted. It localises to the extracellular space. The protein localises to the extracellular matrix. In terms of biological role, plays an important role in generating and maintaining a transparent matrix within the corneal stroma. This is Keratocan (KERA) from Gallus gallus (Chicken).